A 344-amino-acid polypeptide reads, in one-letter code: Methionine import ATP-binding protein MetN (344 aa).

One can recognise an ABC transporter domain in the interval 2-241 (IEINQVNKVF…PKTELAHDFI (240 aa)). 38-45 (GSSGAGKS) contributes to the ATP binding site.

It belongs to the ABC transporter superfamily. Methionine importer (TC 3.A.1.24) family. The complex is composed of two ATP-binding proteins (MetN), two transmembrane proteins (MetI) and a solute-binding protein (MetQ).

It is found in the cell inner membrane. It carries out the reaction L-methionine(out) + ATP + H2O = L-methionine(in) + ADP + phosphate + H(+). The enzyme catalyses D-methionine(out) + ATP + H2O = D-methionine(in) + ADP + phosphate + H(+). Its function is as follows. Part of the ABC transporter complex MetNIQ involved in methionine import. Responsible for energy coupling to the transport system. This is Methionine import ATP-binding protein MetN from Vibrio vulnificus (strain CMCP6).